Reading from the N-terminus, the 327-residue chain is MRALPGLLEARARTPRLLLLQCLLAAARPSSADGSAPDSPFTSPPLREEIMANNFSLESHNISLTEHSSMPVEKNITLERPSNVNLTCQFTTSGDLNAVNVTWKKDGEQLENNYLVSATGSTLYTQYRFTIINSKQMGSYSCFFREEKEQRGTFNFKVPELHGKNKPLISYVGDSTVLTCKCQNCFPLNWTWYSSNGSVKVPVGVQMNKYVINGTYANETKLKITQLLEEDGESYWCRALFQLGESEEHIELVVLSYLVPLKPFLVIVAEVILLVATILLCEKYTQKKKKHSDEGKEFEQIEQLKSDDSNGIENNVPRHRKNESLGQ.

The first 32 residues, 1 to 32 (MRALPGLLEARARTPRLLLLQCLLAAARPSSA), serve as a signal peptide directing secretion. At 33-260 (DGSAPDSPFT…ELVVLSYLVP (228 aa)) the chain is on the extracellular side. Asparagine 54, asparagine 61, asparagine 75, asparagine 85, asparagine 100, asparagine 189, asparagine 196, asparagine 213, and asparagine 218 each carry an N-linked (GlcNAc...) asparagine glycan. 2 Ig-like V-type domains span residues 71-158 (PVEK…NFKV) and 159-253 (PELH…IELV). Disulfide bonds link cysteine 88-cysteine 142 and cysteine 180-cysteine 237. The chain crosses the membrane as a helical span at residues 261–281 (LKPFLVIVAEVILLVATILLC). At 282-327 (EKYTQKKKKHSDEGKEFEQIEQLKSDDSNGIENNVPRHRKNESLGQ) the chain is on the cytoplasmic side. The segment at 287 to 327 (KKKKHSDEGKEFEQIEQLKSDDSNGIENNVPRHRKNESLGQ) is disordered. Residues 291–308 (HSDEGKEFEQIEQLKSDD) are compositionally biased toward basic and acidic residues. Phosphoserine is present on serine 309.

Interacts with SLC16A1, SLC16A6 and SLC16A7.

It is found in the cell membrane. Its subcellular location is the synapse. In terms of biological role, plays a role in the outgrowth of motoneurons and in the formation of neuromuscular junctions. Following muscle denervation, promotes nerve terminal sprouting and the formation of additional acetylcholine receptor clusters at synaptic sites without affecting terminal Schwann cell number or morphology. Delays the retraction of terminal sprouts following re-innervation of denervated endplates. May play a role in targeting the monocarboxylate transporters SLC16A1, SLC16A6 and SLC16A7 to the cell membrane. The chain is Embigin (EMB) from Homo sapiens (Human).